Reading from the N-terminus, the 65-residue chain is Large ribosomal subunit protein bL35 (65 aa).

Belongs to the bacterial ribosomal protein bL35 family.

The chain is Large ribosomal subunit protein bL35 from Yersinia enterocolitica serotype O:8 / biotype 1B (strain NCTC 13174 / 8081).